A 126-amino-acid polypeptide reads, in one-letter code: C-type natriuretic peptide (126 aa).

The first 23 residues, M1–A23, serve as a signal peptide directing secretion. A disordered region spans residues P20–R73. Positions K24–R73 are excised as a propeptide. Pro residues predominate over residues G26–P35. C110 and C126 are disulfide-bonded.

Belongs to the natriuretic peptide family. Post-translationally, degraded by IDE (in vitro).

It localises to the secreted. Functionally, hormone which plays a role in endochondral ossification through regulation of cartilaginous growth plate chondrocytes proliferation and differentiation. May also be vasoactive and natriuretic. Acts by specifically binding and stimulating NPR2 to produce cGMP. Binds the clearance receptor NPR3. This Mus musculus (Mouse) protein is C-type natriuretic peptide (Nppc).